The primary structure comprises 486 residues: Alpha-L-arabinofuranosidase B (486 aa).

A signal peptide spans 1 to 25 (MLSLKAVLRFASVAVAVVLPTLAQA). N-linked (GlcNAc...) asparagine glycosylation occurs at Asn42. The tract at residues 45-342 (LVKQRADPQI…KLYWRSDGTP (298 aa)) is catalytic. The active-site Proton acceptor is the Asp51. The Proton donor role is filled by Glu229. N-linked (GlcNAc...) asparagine glycans are attached at residues Asn302, Asn416, and Asn426. The tract at residues 359 to 467 (SSADQTLYVG…AGSYLVSGGN (109 aa)) is ABD.

It belongs to the glycosyl hydrolase 43 family.

Its subcellular location is the secreted. The catalysed reaction is Hydrolysis of terminal non-reducing alpha-L-arabinofuranoside residues in alpha-L-arabinosides.. The protein operates within glycan metabolism; L-arabinan degradation. Secreted arabinofuranosidase that causes degradation of rice cell wall components during infection. Required for virulence. In Pyricularia oryzae (strain 70-15 / ATCC MYA-4617 / FGSC 8958) (Rice blast fungus), this protein is Alpha-L-arabinofuranosidase B.